Reading from the N-terminus, the 338-residue chain is MRVLVTGGSGYIGSHTCVQLLQNGHDVVILDNLCNSKRSVLPVIERLGGKHPTFVEGDIRNEALITEILHDHAIDTVIHFAGLKAVGESVARPLEYYDNNVNGTLRLVSAMRAANVKNLIFSSSATVYGDQPKIPYVESFPTGTPQSPYGKSKLMVEQILTDLQKAQPEWSIALLRYFNPVGAHPSGDMGEDPQGIPNNLMPYIAQVAVGRRESLAVFGNDYPTEDGTGVRDYIHVMDLADGHVVAMEKLADKSGVHIYNLGAGVGSSVLDVVNAFSKACGKPINYHFAPRRDGDLPAYWADASKADRELNWRVTRTLDEMAQDTWHWQSRHPQGYPD.

Residues 11–12, 31–36, 58–59, 80–84, Asn99, Ser124, Tyr149, Lys153, and Phe178 each bind NAD(+); these read YI, DNLCNS, DI, and FAGLK. Substrate is bound by residues Ser124 and Tyr149. The active-site Proton acceptor is Tyr149. Residues Asn179, 199 to 200, 216 to 218, Arg231, 292 to 295, and Tyr299 contribute to the substrate site; these read NL, AVF, and RDGD.

The protein belongs to the NAD(P)-dependent epimerase/dehydratase family. As to quaternary structure, homodimer. It depends on NAD(+) as a cofactor.

The catalysed reaction is UDP-alpha-D-glucose = UDP-alpha-D-galactose. The protein operates within carbohydrate metabolism; galactose metabolism. In terms of biological role, involved in the metabolism of galactose. Catalyzes the conversion of UDP-galactose (UDP-Gal) to UDP-glucose (UDP-Glc) through a mechanism involving the transient reduction of NAD. The sequence is that of UDP-glucose 4-epimerase (galE) from Salmonella typhimurium (strain LT2 / SGSC1412 / ATCC 700720).